Here is a 634-residue protein sequence, read N- to C-terminus: MFPKVDNPLGHQETRTGATRSQRPQAPKATAASSDELSEESWPSSSWTPSPASTTEGQSTSPPCNLIDNEDSIVAKYINRFRQAQPTSREDRQPAGPTSADFWWLQPTADSSGHLAAGAGEPTGRSAVTGPSPTGVSSTSLASAPLQKVKQSLNSWNSSLLDLETLSLQSRAARLLKRSKASLNDASSSSFPISSDGLSPSSVTFNPDSNKSSNPKEPVLGAPGPSQAIPAPRPASSQATLKPEDDILYQWRQRRKLEQSLQGAGDGTWVLPRMPALTTQTPPVSAVNLGSQDTQPNCTAPCGSVAQPPPSQAFYMERPPLSGPSPHIWAPGTHGVLWAPQANPWVSFGMLPTTLLTSTLAPLASFPVPPTSTSTTPAPTPTPQVCIPGPPTSAPPPCASTPASTLPLPDTPQGPAIPELSSSIQPKKVGPKPRRVSTSSHQKTTVPDTTAFEGPCSQLRGALSQVVTARLFPDSPEDTPPSEADFRKVQAIPSQAKVLRPPPESRRGSKTESRKSQVTLPADAGDPQPATAPKASTLLEVQPREFKMSAPRMGAGDPLTIVPPASSHAPSEDLLSQATKLLQAAEDSDGSEFQEDPVLQLLRAQRAELRQQKRWMPSYLSSWTTLKTRDLRLL.

5 disordered regions span residues 1–69 (MFPK…LIDN), 81–142 (FRQA…TSLA), 185–242 (DASS…ATLK), 368–455 (VPPT…FEGP), and 472–534 (FPDS…TAPK). A compositionally biased stretch (polar residues) spans 15–24 (RTGATRSQRP). Composition is skewed to low complexity over residues 40 to 56 (ESWP…STTE), 128 to 140 (VTGP…SSTS), and 185 to 202 (DASS…SPSS). A compositionally biased stretch (polar residues) spans 203–215 (VTFNPDSNKSSNP). A compositionally biased stretch (low complexity) spans 368 to 377 (VPPTSTSTTP). Residues 378-399 (APTPTPQVCIPGPPTSAPPPCA) are compositionally biased toward pro residues. Positions 436–448 (VSTSSHQKTTVPD) are enriched in polar residues. Over residues 503–515 (PESRRGSKTESRK) the composition is skewed to basic and acidic residues. Residue serine 588 is modified to Phosphoserine.

It is found in the cytoplasm. Its subcellular location is the cytoskeleton. The protein resides in the microtubule organizing center. The protein localises to the centrosome. This Mus musculus (Mouse) protein is Proline and serine-rich protein 3 (Proser3).